We begin with the raw amino-acid sequence, 546 residues long: Nicotinic acid-CoA ligase olcI (546 aa).

AMP is bound at residue 194–205 (MFSTSGTSGLPK). Residues 445–523 (EIEAVLLKDP…ESLPRTGIGK (79 aa)) form an AMP-binding region.

It belongs to the ATP-dependent AMP-binding enzyme family.

The catalysed reaction is nicotinate + ATP + CoA = nicotinyl-CoA + AMP + diphosphate. The protein operates within secondary metabolite biosynthesis; terpenoid biosynthesis. Functionally, nicotinic acid-CoA ligase; part of the gene cluster that mediates the biosynthesis of 15-deoxyoxalicine B. The first step of the pathway is the synthesis of nicotinyl-CoA from nicotinic acid by the nicotinic acid-CoA ligase olcI. Nicotinyl-CoA is then a substrate of polyketide synthase olcA to produce 4-hydroxy-6-(3-pyridinyl)-2H-pyran-2-one (HPPO) which is further prenylated by the polyprenyl transferase olcH to yield geranylgeranyl-HPPO. Geranylgeranyl pyrophosphate is provided by the cluster-specific geranylgeranyl pyrophosphate synthase olcC. The FAD-dependent monooxygenase olcE catalyzes the epoxidation of geranylgeranyl-HPPO and the terpene cyclase olcD catalyzes the cyclization of the terpenoid component, resulting in the formation of the tricyclic terpene moiety seen in predecaturin E. The cytochrome P450 monooxygenase then catalyzes the allylic oxidation of predecaturin E, which is followed by spirocylization with concomitant loss of one molecule of water to form decaturin E. Decaturin E is the substrate of the cytochrome P450 monooxygenase olcJ which hydroxylates it at the C-29 position to form decaturin F. The short-chain dehydrogenase/reductase olcF may catalyze the oxidation of decaturin F to generate the 29-hydroxyl-27-one intermediate, and subsequent hemiacetal formation probably leads to the formation of decaturin C. The dioxygenase olcK may be a peroxisomal enzyme that catalyzes the hydroxylation of decaturin C into decaturin A once decaturin C is shuttled into the peroxisome by the MFS transporter olcL. Finally the cytochrome P450 monooxygenase olcB catalyzes the oxidative rearrangement to yield 15-deoxyoxalicine B. In the absence of olcJ, decaturin E may be shunted to a pathway in which it is oxidized to a ketone, possibly by olcF, to form decaturin D, which undergoes further allylic oxidation to yield decaturin G. Moreover, in the absence of oclK or oclL, oclB can convert decaturin C into 15-deoxyoxalicine A. The polypeptide is Nicotinic acid-CoA ligase olcI (Penicillium canescens).